The primary structure comprises 333 residues: Fructose-1,6-bisphosphatase class 1 1 (333 aa).

Mg(2+)-binding residues include Glu-81, Asp-100, Leu-102, and Asp-103. Substrate-binding positions include 103–106 (DGSS) and Asn-191. Mg(2+) is bound at residue Glu-263.

The protein belongs to the FBPase class 1 family. In terms of assembly, homotetramer. It depends on Mg(2+) as a cofactor.

The protein localises to the cytoplasm. The catalysed reaction is beta-D-fructose 1,6-bisphosphate + H2O = beta-D-fructose 6-phosphate + phosphate. It participates in carbohydrate biosynthesis; Calvin cycle. This Cereibacter sphaeroides (strain ATCC 17023 / DSM 158 / JCM 6121 / CCUG 31486 / LMG 2827 / NBRC 12203 / NCIMB 8253 / ATH 2.4.1.) (Rhodobacter sphaeroides) protein is Fructose-1,6-bisphosphatase class 1 1.